Reading from the N-terminus, the 332-residue chain is tRNA dimethylallyltransferase (332 aa).

17–24 contributes to the ATP binding site; the sequence is GPTCSGKS. 19 to 24 contacts substrate; sequence TCSGKS. Interaction with substrate tRNA regions lie at residues 42-45 and 166-170; these read DSMQ and QRISR.

The protein belongs to the IPP transferase family. In terms of assembly, monomer. The cofactor is Mg(2+).

It catalyses the reaction adenosine(37) in tRNA + dimethylallyl diphosphate = N(6)-dimethylallyladenosine(37) in tRNA + diphosphate. Functionally, catalyzes the transfer of a dimethylallyl group onto the adenine at position 37 in tRNAs that read codons beginning with uridine, leading to the formation of N6-(dimethylallyl)adenosine (i(6)A). The protein is tRNA dimethylallyltransferase of Gluconobacter oxydans (strain 621H) (Gluconobacter suboxydans).